A 1096-amino-acid polypeptide reads, in one-letter code: MAPGRVYPPSDKPIALLDLLHFHLVHNPYFPIYIFPNDDDTLTEISFLEFTRAVHRVAHIVRPNRSGQDGEIVALIANTDTLLYHAIGAGMILADIVPFYMSPRNSTPAVASMLQKTACNRIFTIPSVHESLISGLDGLGGPALQFQTIPTLAQVFPNLGKEKSHYPFEPYPEAAITPALDAVFLYLHSSGSTGYPKPIPLTNRCQLHWLQQPGILGYRHYLPDLCLGFAALPPFHSLGNCMQLYTPLISVITVALYAPTSFHDPTAPPVIPTSENILDNLRKTGANCIIVVPSFLEQWAWDEKAVETLKNMSLVLYGGGPLSSKVGDALCAAGVSLAVQYGTTEFGAPTQLPDKVQLENGLWEWMRFGLSVLIRWVHQGDETYECQLLTTEKYQMAVENMSDVKGYATSDLFVKHPTHEGLWKIIGRTDDVLTLASGEKTVPAMMEGIISSSAHVNGVIMFGRGRNQVGVLVEPRSAHVDLADNKAIEEFRNRIWYEVDEANKNAPTFSRIFKEMILITSPDKPMFRVGKGTTSKNATLKAYEEEIDALYRTVEASTKIGNSTAPPSEWTVSTLEHWLNEQATELALGTIVVPNIDLFAQGFDSLSATFLRNRIIGAMRSFPDLQLRAAARRIPHNLVFECPNIKLLADRVAKIAGQPQSQVNEQVKGSALHDAKMEIETMLGKYSAELRRTKKTNGSHVESSASTKAGRTVVLLTGSTGGLGSYLLASLLKNEEVAKVYALNRHSKASRVQQRQTAVFEDRELDVALLKLDKLIFIEADATAERCGLNEQTYDQLRQSVTVIIHSAWRVDFNLPLSSFEPNVRGTFQLVDLALSSTLHSTPRFLFISSVGSAQGWDRSRGAFPEDVQLDASVAVGSGYGASKYIAERLVTSSGLNATSLRLGQIAGGPNGAWTLSDWFPILVKSSLALGKFPNIQAYVSWMPAEKVSAAILDVALAKHAPPPALNIVHPHPVSWPDVLKPVRDAVVAKKRLPKESLPFVRMSEWVALLEMRAEEATESDINAIPAIKLLDWFRALAGVDEDLQRTGRTDVEVGGIVKMVTEKAQSISATLSGLSQIGQADAKLWVDYWIARGLF.

An adenylation (A) domain region spans residues 39 to 352; the sequence is DDTLTEISFL…TTEFGAPTQL (314 aa). Residues H236, 339-340, T344, and 425-428 each bind AMP; these read VQ and IIGR. Residues 569–656 form the Carrier domain; that stretch reads EWTVSTLEHW…LLADRVAKIA (88 aa). S605 bears the O-(pantetheine 4'-phosphoryl)serine mark. The interval 716-952 is reductase (R) domain; sequence LTGSTGGLGS…MPAEKVSAAI (237 aa). NADP(+) contacts are provided by residues 720 to 723, 807 to 809, Y880, and K884; these read TGGL and SAW.

The protein belongs to the adenylate-forming reductase family.

Its function is as follows. Adenylate-forming reductase, a natural product biosynthesis enzyme that resembles non-ribosomal peptide synthetases, yet serves to modify one substrate, rather than to condense two or more building blocks. The A-domain preferentially accepts L-threonine as substrate. The natural product of the enzyme is not yet known. The protein is Adenylate-forming reductase Nps9 of Serpula lacrymans var. lacrymans (strain S7.9) (Dry rot fungus).